The chain runs to 431 residues: Tol-Pal system protein TolB (431 aa).

The N-terminal stretch at 1 to 26 (MRLMTKLGFRALVASCLIAAGAAANA) is a signal peptide. A disordered region spans residues 411–431 (PQILSVQGGSVREPSWGPFMQ).

This sequence belongs to the TolB family. In terms of assembly, the Tol-Pal system is composed of five core proteins: the inner membrane proteins TolA, TolQ and TolR, the periplasmic protein TolB and the outer membrane protein Pal. They form a network linking the inner and outer membranes and the peptidoglycan layer.

Its subcellular location is the periplasm. Part of the Tol-Pal system, which plays a role in outer membrane invagination during cell division and is important for maintaining outer membrane integrity. In Burkholderia ambifaria (strain ATCC BAA-244 / DSM 16087 / CCUG 44356 / LMG 19182 / AMMD) (Burkholderia cepacia (strain AMMD)), this protein is Tol-Pal system protein TolB.